Here is a 409-residue protein sequence, read N- to C-terminus: MSTHPIRVFSEIGKLKKVMLHRPGKELENLQPDYLERLLFDDIPFLEDAQKEHDNFAQALRNEGVEVLYLEQLAAESLTSPEIREQFIEEYLEEANIRGRETKKAIRELLRGIKDNRELVEKTMAGVQKVELPEIPEEAKGLTDLVESDYPFAIDPMPNLYFTRDPFATIGNAVSLNHMYADTRNRETLYGKYIFKHHPVYGGKVDLVYNREEDTRIEGGDELVLSKDVLAVGISQRTDAASIEKLLVNIFKKNVGFKKVLAFEFANNRKFMHLDTVFTMVDYDKFTIHPEIEGDLRVYSVTYVDDKLKIVEEKGDLAEILAENLGVEKVHLIRCGGGNIVAAAREQWNDGSNTLTIAPGVVVVYDRNTVTNKILEEYGLRLIKIRGSELVRGRGGPRCMSMPFEREEI.

C399 serves as the catalytic Amidino-cysteine intermediate.

It belongs to the arginine deiminase family.

It localises to the cytoplasm. It carries out the reaction L-arginine + H2O = L-citrulline + NH4(+). It functions in the pathway amino-acid degradation; L-arginine degradation via ADI pathway; carbamoyl phosphate from L-arginine: step 1/2. This Streptococcus sanguinis (strain SK36) protein is Arginine deiminase.